We begin with the raw amino-acid sequence, 215 residues long: Ribonuclease HII (215 aa).

The RNase H type-2 domain maps to 24–215; the sequence is GVVFGVDEVG…PIRQFYENVD (192 aa). A divalent metal cation-binding residues include Asp-30, Glu-31, and Asp-125.

It belongs to the RNase HII family. Requires Mn(2+) as cofactor. The cofactor is Mg(2+).

It is found in the cytoplasm. The enzyme catalyses Endonucleolytic cleavage to 5'-phosphomonoester.. Functionally, endonuclease that specifically degrades the RNA of RNA-DNA hybrids. This chain is Ribonuclease HII, found in Zymomonas mobilis subsp. mobilis (strain ATCC 31821 / ZM4 / CP4).